The chain runs to 419 residues: Light-independent protochlorophyllide reductase subunit N (419 aa).

[4Fe-4S] cluster contacts are provided by Cys20, Cys45, and Cys102.

Belongs to the BchN/ChlN family. As to quaternary structure, protochlorophyllide reductase is composed of three subunits; BchL, BchN and BchB. Forms a heterotetramer of two BchB and two BchN subunits. Requires [4Fe-4S] cluster as cofactor.

The catalysed reaction is chlorophyllide a + oxidized 2[4Fe-4S]-[ferredoxin] + 2 ADP + 2 phosphate = protochlorophyllide a + reduced 2[4Fe-4S]-[ferredoxin] + 2 ATP + 2 H2O. The protein operates within porphyrin-containing compound metabolism; bacteriochlorophyll biosynthesis (light-independent). Its function is as follows. Component of the dark-operative protochlorophyllide reductase (DPOR) that uses Mg-ATP and reduced ferredoxin to reduce ring D of protochlorophyllide (Pchlide) to form chlorophyllide a (Chlide). This reaction is light-independent. The NB-protein (BchN-BchB) is the catalytic component of the complex. In Chlorobaculum tepidum (strain ATCC 49652 / DSM 12025 / NBRC 103806 / TLS) (Chlorobium tepidum), this protein is Light-independent protochlorophyllide reductase subunit N.